The sequence spans 164 residues: Transcriptional repressor NrdR (164 aa).

The segment at 3-34 (CPFCSAQDTKVIDSRLVADGVQIRRRRECLSC) is a zinc-finger region. In terms of domain architecture, ATP-cone spans 49-139 (PRLVKTDGTR…VYRSFQDISE (91 aa)).

This sequence belongs to the NrdR family. Zn(2+) serves as cofactor.

Functionally, negatively regulates transcription of bacterial ribonucleotide reductase nrd genes and operons by binding to NrdR-boxes. This is Transcriptional repressor NrdR from Alcanivorax borkumensis (strain ATCC 700651 / DSM 11573 / NCIMB 13689 / SK2).